Consider the following 1119-residue polypeptide: Protein translocase subunit SecA (1119 aa).

Residues Gln-175, 213 to 217 (GEGKT), and Asp-714 each bind ATP. Positions 1106, 1108, 1117, and 1118 each coordinate Zn(2+).

The protein belongs to the SecA family. Monomer and homodimer. Part of the essential Sec protein translocation apparatus which comprises SecA, SecYEG and auxiliary proteins SecDF. Other proteins may also be involved. It depends on Zn(2+) as a cofactor.

The protein localises to the cell inner membrane. Its subcellular location is the cytoplasm. It carries out the reaction ATP + H2O + cellular proteinSide 1 = ADP + phosphate + cellular proteinSide 2.. Part of the Sec protein translocase complex. Interacts with the SecYEG preprotein conducting channel. Has a central role in coupling the hydrolysis of ATP to the transfer of proteins into and across the cell membrane, serving as an ATP-driven molecular motor driving the stepwise translocation of polypeptide chains across the membrane. This is Protein translocase subunit SecA from Azobacteroides pseudotrichonymphae genomovar. CFP2.